A 118-amino-acid polypeptide reads, in one-letter code: Ly-6/neurotoxin-like protein 1 (118 aa).

The first 22 residues, 1 to 22, serve as a signal peptide directing secretion; the sequence is MTPLLTLFLVVLMGLPLAPVQA. One can recognise a UPAR/Ly6 domain in the interval 23–107; it reads LDCHVCAYNG…LAIPATLALA (85 aa). Intrachain disulfides connect C25-C48, C28-C35, C41-C66, C70-C87, and C88-C93. S95 carries GPI-anchor amidated serine lipidation. A propeptide spans 96-118 (removed in mature form); that stretch reads AGLAIPATLALAPVLLATLWGLL.

As to quaternary structure, interacts with nAChRs containing alpha-4:beta-2 (CHRNA4:CHRNB2) and alpha-7 (CHRNA7) subunits. Interacts with CHRNA4 probably in the endoplasmic reticulum prior to nAChR pentameric assembly. Interacts with KCNA2/Potassium voltage-gated channel subfamily A member 2. As to expression, expressed in lung predominantly in airway epithelial cells, submucous glands, and smooth muscle cells, in endothelial and smooth muscle cells in vessel walls and in alveolar type II cells (at protein level). Also expressed in brain.

Its subcellular location is the cell membrane. It localises to the cell projection. It is found in the dendrite. The protein localises to the endoplasmic reticulum. In terms of biological role, acts in different tissues through interaction to nicotinic acetylcholine receptors (nAChRs). The proposed role as modulator of nAChR activity seems to be dependent on the nAChR subtype and stoichiometry, and to involve an effect on nAChR trafficking and its cell surface expression, and on single channel properties of the nAChR inserted in the plasma membrane. Modulates functional properties of nicotinic acetylcholine receptors (nAChRs) to prevent excessive excitation, and hence neurodegeneration. Enhances desensitization by increasing both the rate and extent of desensitization of alpha-4:beta-2-containing nAChRs and slowing recovery from desensitization. Promotes large amplitude ACh-evoked currents through alpha-4:beta-2 nAChRs. Is involved in regulation of the nAChR pentameric assembly in the endoplasmic reticulum. Shifts stoichiometry from high sensitivity alpha-4(2):beta-2(3) to low sensitivity alpha-4(3):beta-2(2) nAChR. In vitro modulates alpha-3:beta-4-containing nAChRs. Reduces cell surface expression of (alpha-3:beta-4)(2):beta-4 and (alpha-3:beta-4)(2):alpha-5 nAChRs suggesting an interaction with nAChR alpha-3(-):(+)beta-4 subunit interfaces and an allosteric mode. Corresponding single channel effects characterized by decreased unitary conductance, altered burst proportions and enhanced desensitization/inactivation seem to depend on nAChR alpha:alpha subunit interfaces and are greater in (alpha-3:beta-2)(2):alpha-3 when compared to (alpha-3:beta-2)(2):alpha-5 nAChRs. Prevents plasticity in the primary visual cortex late in life. This is Ly-6/neurotoxin-like protein 1 from Macaca mulatta (Rhesus macaque).